Here is a 108-residue protein sequence, read N- to C-terminus: MAGKTVTRADLSEAVYQQVGLSRAESAALVETVLAEICTCLSSGETVKLSSFGSFVVRSKGKRIGRNPKTGVEVEIEPRQVMVFKPSNVLKARINGGHVNGLDMDEDE.

This sequence belongs to the bacterial histone-like protein family. In terms of assembly, heterodimer of an alpha and a beta chain.

This protein is one of the two subunits of integration host factor, a specific DNA-binding protein that functions in genetic recombination as well as in transcriptional and translational control. The chain is Integration host factor subunit alpha from Methylorubrum extorquens (strain CM4 / NCIMB 13688) (Methylobacterium extorquens).